The sequence spans 149 residues: UPF0756 membrane protein MS1439 (149 aa).

4 helical membrane passes run 10–32 (IMLV…ISAL), 56–76 (VGII…KVQL), 82–102 (FLNW…WFAG), and 126–146 (VAFL…LAVI).

The protein belongs to the UPF0756 family.

It is found in the cell membrane. The chain is UPF0756 membrane protein MS1439 from Mannheimia succiniciproducens (strain KCTC 0769BP / MBEL55E).